The following is a 372-amino-acid chain: Flap endonuclease 1 (372 aa).

Residues 1–105 are N-domain; the sequence is MGVKGLNQLI…GELEKRLLRR (105 aa). Asp34 is a Mg(2+) binding site. Residues Arg47 and Arg71 each contribute to the DNA site. 5 residues coordinate Mg(2+): Asp87, Glu159, Glu161, Asp180, and Asp182. Residues 123–254 form an I-domain region; that stretch reads EVLKFEKRLV…ATAFKLIKEH (132 aa). Residue Glu159 participates in DNA binding. 2 residues coordinate DNA: Gly232 and Asp234. Asp234 serves as a coordination point for Mg(2+). Residues 339–347 form an interaction with PCNA region; sequence VQGRLDGFF. Over residues 353–366 the composition is skewed to basic and acidic residues; that stretch reads DDKKRKADPKESKA. Residues 353–372 are disordered; that stretch reads DDKKRKADPKESKASKKKKK.

This sequence belongs to the XPG/RAD2 endonuclease family. FEN1 subfamily. Interacts with PCNA. Three molecules of RAD27 bind to one PCNA trimer with each molecule binding to one PCNA monomer. PCNA stimulates the nuclease activity without altering cleavage specificity. The cofactor is Mg(2+). Post-translationally, phosphorylated. Phosphorylation upon DNA damage induces relocalization to the nuclear plasma.

Its subcellular location is the nucleus. The protein localises to the nucleolus. It localises to the nucleoplasm. It is found in the mitochondrion. Structure-specific nuclease with 5'-flap endonuclease and 5'-3' exonuclease activities involved in DNA replication and repair. During DNA replication, cleaves the 5'-overhanging flap structure that is generated by displacement synthesis when DNA polymerase encounters the 5'-end of a downstream Okazaki fragment. It enters the flap from the 5'-end and then tracks to cleave the flap base, leaving a nick for ligation. Also involved in the long patch base excision repair (LP-BER) pathway, by cleaving within the apurinic/apyrimidinic (AP) site-terminated flap. Acts as a genome stabilization factor that prevents flaps from equilibrating into structures that lead to duplications and deletions. Also possesses 5'-3' exonuclease activity on nicked or gapped double-stranded DNA, and exhibits RNase H activity. Also involved in replication and repair of rDNA and in repairing mitochondrial DNA. This is Flap endonuclease 1 from Candida albicans (strain WO-1) (Yeast).